We begin with the raw amino-acid sequence, 387 residues long: Formate-dependent phosphoribosylglycinamide formyltransferase (387 aa).

N(1)-(5-phospho-beta-D-ribosyl)glycinamide-binding positions include 15–16 (EL) and Glu75. Residues Arg106, Lys147, 152-157 (SSGKGQ), 187-190 (EEFI), and Glu195 each bind ATP. Residues 111-301 (DLASNELNIR…EFELHLRAVL (191 aa)) enclose the ATP-grasp domain. Positions 260 and 272 each coordinate Mg(2+). N(1)-(5-phospho-beta-D-ribosyl)glycinamide-binding positions include Asp279, Lys349, and 356 to 357 (RR).

Belongs to the PurK/PurT family. In terms of assembly, homodimer.

The catalysed reaction is N(1)-(5-phospho-beta-D-ribosyl)glycinamide + formate + ATP = N(2)-formyl-N(1)-(5-phospho-beta-D-ribosyl)glycinamide + ADP + phosphate + H(+). It functions in the pathway purine metabolism; IMP biosynthesis via de novo pathway; N(2)-formyl-N(1)-(5-phospho-D-ribosyl)glycinamide from N(1)-(5-phospho-D-ribosyl)glycinamide (formate route): step 1/1. In terms of biological role, involved in the de novo purine biosynthesis. Catalyzes the transfer of formate to 5-phospho-ribosyl-glycinamide (GAR), producing 5-phospho-ribosyl-N-formylglycinamide (FGAR). Formate is provided by PurU via hydrolysis of 10-formyl-tetrahydrofolate. The protein is Formate-dependent phosphoribosylglycinamide formyltransferase of Prochlorococcus marinus (strain NATL1A).